The primary structure comprises 332 residues: Glyceraldehyde-3-phosphate dehydrogenase (332 aa).

Residues 11 to 12, Asp-34, Arg-78, and Ser-120 contribute to the NAD(+) site; that span reads RI. Residues 151–153, Thr-182, Arg-197, 210–211, and Arg-233 contribute to the D-glyceraldehyde 3-phosphate site; these read SCT and TG. Cys-152 (nucleophile) is an active-site residue. Asn-314 provides a ligand contact to NAD(+).

It belongs to the glyceraldehyde-3-phosphate dehydrogenase family. In terms of assembly, homotetramer.

The protein resides in the cytoplasm. The enzyme catalyses D-glyceraldehyde 3-phosphate + phosphate + NAD(+) = (2R)-3-phospho-glyceroyl phosphate + NADH + H(+). Its pathway is carbohydrate degradation; glycolysis; pyruvate from D-glyceraldehyde 3-phosphate: step 1/5. Catalyzes the oxidative phosphorylation of glyceraldehyde 3-phosphate (G3P) to 1,3-bisphosphoglycerate (BPG) using the cofactor NAD. The first reaction step involves the formation of a hemiacetal intermediate between G3P and a cysteine residue, and this hemiacetal intermediate is then oxidized to a thioester, with concomitant reduction of NAD to NADH. The reduced NADH is then exchanged with the second NAD, and the thioester is attacked by a nucleophilic inorganic phosphate to produce BPG. This chain is Glyceraldehyde-3-phosphate dehydrogenase (gap), found in Kitasatospora aureofaciens (Streptomyces aureofaciens).